We begin with the raw amino-acid sequence, 57 residues long: UPF0057 membrane protein T23F2.4 (57 aa).

The next 2 helical transmembrane spans lie at 3 to 23 (ITCM…VGVF) and 36 to 56 (ILLT…IILA).

The protein belongs to the UPF0057 (PMP3) family.

Its subcellular location is the membrane. The chain is UPF0057 membrane protein T23F2.4 from Caenorhabditis elegans.